An 80-amino-acid polypeptide reads, in one-letter code: Small ribosomal subunit protein bS21 (80 aa).

It belongs to the bacterial ribosomal protein bS21 family.

The polypeptide is Small ribosomal subunit protein bS21 (Rhodospirillum rubrum (strain ATCC 11170 / ATH 1.1.1 / DSM 467 / LMG 4362 / NCIMB 8255 / S1)).